Here is a 173-residue protein sequence, read N- to C-terminus: Probable chemoreceptor glutamine deamidase CheD (173 aa).

It belongs to the CheD family.

The enzyme catalyses L-glutaminyl-[protein] + H2O = L-glutamyl-[protein] + NH4(+). Functionally, probably deamidates glutamine residues to glutamate on methyl-accepting chemotaxis receptors (MCPs), playing an important role in chemotaxis. The sequence is that of Probable chemoreceptor glutamine deamidase CheD from Haloarcula marismortui (strain ATCC 43049 / DSM 3752 / JCM 8966 / VKM B-1809) (Halobacterium marismortui).